The primary structure comprises 132 residues: Protein NrdI (132 aa).

Belongs to the NrdI family.

Probably involved in ribonucleotide reductase function. This is Protein NrdI from Bartonella henselae (strain ATCC 49882 / DSM 28221 / CCUG 30454 / Houston 1) (Rochalimaea henselae).